We begin with the raw amino-acid sequence, 105 residues long: Small ribosomal subunit protein uS10 (105 aa).

Belongs to the universal ribosomal protein uS10 family. Part of the 30S ribosomal subunit.

Involved in the binding of tRNA to the ribosomes. This Trichodesmium erythraeum (strain IMS101) protein is Small ribosomal subunit protein uS10.